The primary structure comprises 152 residues: Transcriptional regulator MraZ (152 aa).

SpoVT-AbrB domains are found at residues 7–51 (KERH…APDR) and 89–132 (LEMV…DPQR).

It belongs to the MraZ family. In terms of assembly, forms oligomers.

The protein localises to the cytoplasm. It is found in the nucleoid. The chain is Transcriptional regulator MraZ from Pelodictyon phaeoclathratiforme (strain DSM 5477 / BU-1).